Here is a 451-residue protein sequence, read N- to C-terminus: MDYEKNVTLKEKSHAELSVKIKKSDVQESYKKLLNKYSKELQIPGFRKGKVPVSVLETKYGDAIKGDLAGDLIEESLKEIFESLDEYERPLPYSYPELNEKPELKVEEDFSFTVHYDVFPKVEIKKTEGFTIEVPEASVSEKDIKKELERLQERNALVTACKEGTSAEKDHIATIDYCELDDEGKTISGTERKDFVFTIGSGLNIYKIDDDIVGMKKGESKEITKTFPEDDSNKDLAGKTKKIKVTLTALKYKDLPALDDDFAQDINEKYKNLDELKADIKKKFEISVEEKIKSLQKNALTEQMVKEHTIDLPESMVRAELESRWMMMANQFRTTPEELEKMFGKGPQSKAALLEGWREDSEKTLKERVLIETLLKEKNIEVSDDEIEAEYVRLSERMDIALDELKKYYSNPREKEYLSEGLKEEKLFKALYEKSTIKKGKKLTFDELLKD.

The PPIase FKBP-type domain maps to 170–256; the sequence is DHIATIDYCE…LTALKYKDLP (87 aa).

It belongs to the FKBP-type PPIase family. Tig subfamily.

It localises to the cytoplasm. It catalyses the reaction [protein]-peptidylproline (omega=180) = [protein]-peptidylproline (omega=0). Involved in protein export. Acts as a chaperone by maintaining the newly synthesized protein in an open conformation. Functions as a peptidyl-prolyl cis-trans isomerase. The chain is Trigger factor from Treponema denticola (strain ATCC 35405 / DSM 14222 / CIP 103919 / JCM 8153 / KCTC 15104).